A 442-amino-acid chain; its full sequence is 3-isopropylmalate dehydratase large subunit (442 aa).

The [4Fe-4S] cluster site is built by cysteine 347, cysteine 407, and cysteine 410.

This sequence belongs to the aconitase/IPM isomerase family. LeuC type 1 subfamily. Heterodimer of LeuC and LeuD. [4Fe-4S] cluster serves as cofactor.

It carries out the reaction (2R,3S)-3-isopropylmalate = (2S)-2-isopropylmalate. It functions in the pathway amino-acid biosynthesis; L-leucine biosynthesis; L-leucine from 3-methyl-2-oxobutanoate: step 2/4. Its function is as follows. Catalyzes the isomerization between 2-isopropylmalate and 3-isopropylmalate, via the formation of 2-isopropylmaleate. This is 3-isopropylmalate dehydratase large subunit from Buchnera aphidicola subsp. Uroleucon solidaginis.